We begin with the raw amino-acid sequence, 116 residues long: Large ribosomal subunit protein bL17 (116 aa).

The protein belongs to the bacterial ribosomal protein bL17 family. In terms of assembly, part of the 50S ribosomal subunit. Contacts protein L32.

This is Large ribosomal subunit protein bL17 from Cyanothece sp. (strain PCC 7425 / ATCC 29141).